Here is a 269-residue protein sequence, read N- to C-terminus: Hdr-like menaquinol oxidoreductase iron-sulfur subunit 1 (269 aa).

The segment at residues M1–A26 is a signal peptide (tat-type signal). [4Fe-4S] cluster is bound by residues C52, C55, C72, C76, C118, C121, C126, C130, C150, C153, C156, C160, C194, C197, C215, and C219. In terms of domain architecture, 4Fe-4S ferredoxin-type spans G141–I170.

As to quaternary structure, consists of five subunits: an integral membrane subunit, a cytochrome b-like subunit, a cytochrome c subunit and two iron-sulfur subunits. Requires [4Fe-4S] cluster as cofactor. Predicted to be exported by the Tat system. The position of the signal peptide cleavage has been experimentally proven.

The protein resides in the cell membrane. Has menaquinol-oxidizing activity. HmeA, HmeB and HmeE subunits may together catalyze electron transfer from menaquinol to cytochrome c. The sequence is that of Hdr-like menaquinol oxidoreductase iron-sulfur subunit 1 (hmeA) from Archaeoglobus fulgidus (strain ATCC 49558 / DSM 4304 / JCM 9628 / NBRC 100126 / VC-16).